The primary structure comprises 1658 residues: Cortactin-binding protein 2 (1658 aa).

Disordered stretches follow at residues 1 to 24 (MATDGASCEPDFSRAPEDAAGATA), 203 to 235 (KTKTSALEEELSAEKRRSTEMEAQMEKQLSEFD), 348 to 437 (GAAL…LHPG), 451 to 475 (GNANDPDQNGNTTQSPPSRDVSPTS), and 495 to 612 (RFTS…PPKP). Residues 119 to 276 (RKMQERMSTQ…EQLKRGNDSK (158 aa)) adopt a coiled-coil conformation. Over residues 214–235 (SAEKRRSTEMEAQMEKQLSEFD) the composition is skewed to basic and acidic residues. Residues 385-394 (GPSAGSASST) are compositionally biased toward low complexity. Over residues 399–418 (NSTAPPTVQTPGIAPQSYSQ) the composition is skewed to polar residues. Arg-495 bears the Asymmetric dimethylarginine mark. Residues 509-520 (AAPTGDGGTCPP) show a composition bias toward low complexity. Positions 580 to 590 (TMASPPSSLPQ) are enriched in polar residues. 6 ANK repeats span residues 706 to 736 (GRPTLLQQAATQGNVTLLSMLLNEEGLDINY), 740 to 769 (DGHSALYSAAKNGHTDCVRLLLNAGAQVNA), 773 to 802 (NGFTPLCAAAAQGHFKCVELLISYDANINH), 806 to 835 (EGQTPLYLACKNGNKECIQLLLEAGTDRSV), 839 to 868 (DGWTPVHAAVDTGNVDSLKLLMYHRAPACR), and 909 to 939 (EGWTAAHIAASKGFKNCLEILCMHGGLEPER). Residues 1448–1478 (ESGAWRKVSTSPRKKSGRFSPPSWNKPGLSE) form a disordered region. Ser-1521 carries the post-translational modification Phosphoserine. Disordered regions lie at residues 1538-1595 (RSES…NSQS) and 1611-1642 (PRSKVTQCSQNTKRSSSSSNTRQIEINNNTKE). A compositionally biased stretch (basic and acidic residues) spans 1539-1558 (SESDISKIADSRDDLRRFDG). 2 stretches are compositionally biased toward polar residues: residues 1559 to 1569 (SRNNPAFSTVN) and 1581 to 1595 (PLSSHETTECSNSQS). The span at 1619-1633 (SQNTKRSSSSSNTRQ) shows a compositional bias: low complexity.

Interacts with CTTN/cortactin SH3 domain. Interacts with STRN, STRN4/zinedin and MOB4/phocein; this interactions mediate the association with the STRIPAK core complex and may regulate dendritic spine distribution of the STRIPAK complex in hippocampal neurons. Activation of glutamate receptors weakens the interaction with STRN and STRN4.

It is found in the cytoplasm. Its subcellular location is the cell cortex. It localises to the cell projection. The protein resides in the dendritic spine. Functionally, regulates the dendritic spine distribution of CTTN/cortactin in hippocampal neurons, and thus controls dendritic spinogenesis and dendritic spine maintenance. Associates with the striatin-interacting phosphatase and kinase (STRIPAK) core complex to regulate dendritic spine distribution of the STRIPAK complex in hippocampal neurons. The sequence is that of Cortactin-binding protein 2 (CTTNBP2) from Neofelis nebulosa (Clouded leopard).